Consider the following 71-residue polypeptide: MAKWILLIVALLVLGHVPSGSTEFKRCWNGQGACRTYCTRQEKFIHLCPDASLCCLSYSLKASPHSRAGGV.

The N-terminal stretch at 1–22 (MAKWILLIVALLVLGHVPSGST) is a signal peptide. 3 cysteine pairs are disulfide-bonded: cysteine 27–cysteine 54, cysteine 34–cysteine 48, and cysteine 38–cysteine 55.

The protein belongs to the beta-defensin family.

It is found in the secreted. In terms of biological role, has antibacterial activity. The polypeptide is Beta-defensin 25 (Defb25) (Rattus norvegicus (Rat)).